The sequence spans 752 residues: Peptidyl-prolyl cis-trans isomerase G (752 aa).

Positions 11-176 (FFDIAINNQP…AEVRILSCGE (166 aa)) constitute a PPIase cyclophilin-type domain. Basic residues predominate over residues 182–193 (KVKKEEKKRHKS). Residues 182 to 752 (KVKKEEKKRH…SPGTDEDKSG (571 aa)) are disordered. A compositionally biased stretch (low complexity) spans 194–214 (SSSSSSSDSDSSSDSQSSSDS). Positions 226–251 (RKRKKKHRKNSRKHKKEKKKRKKSKK) are enriched in basic residues. 5 positions are modified to phosphoserine: serine 252, serine 254, serine 255, serine 257, and serine 288. Over residues 290–308 (PKADDKERKNREREREREC) the composition is skewed to basic and acidic residues. The residue at position 313 (serine 313) is a Phosphoserine. The segment covering 327-345 (FGRKIKGRGPRRYRTPSRS) has biased composition (basic residues). 2 stretches are compositionally biased toward basic and acidic residues: residues 346–366 (RSRD…EMQR) and 377–447 (RWIK…DKYN). Phosphoserine is present on serine 354. Residue threonine 356 is modified to Phosphothreonine. The residue at position 384 (serine 384) is a Phosphoserine. Residue lysine 390 forms a Glycyl lysine isopeptide (Lys-Gly) (interchain with G-Cter in SUMO2) linkage. Serine 395, serine 411, and serine 413 each carry phosphoserine. A compositionally biased stretch (basic residues) spans 448–461 (KNKVKKRGKSKSRS). 2 stretches are compositionally biased toward basic and acidic residues: residues 462–552 (KSKE…DLTK) and 577–598 (RSHD…QEYR). The span at 599 to 625 (RRGRSRSRDRRTPGRSRSKDRRRRRRD) shows a compositional bias: basic residues. Residues 626–682 (SRSSEREESQSRNKEKYRSQDSKSSHRKENSEGEKRMYSKSRDHSSSNNNREKKADI) are compositionally biased toward basic and acidic residues. Phosphoserine is present on residues serine 685 and serine 688. The span at 685 to 705 (SPVSKTKQSSQDNEVKSSTLK) shows a compositional bias: polar residues. Lysine 691 participates in a covalent cross-link: Glycyl lysine isopeptide (Lys-Gly) (interchain with G-Cter in SUMO2). Residues serine 694, serine 742, and serine 743 each carry the phosphoserine modification. A compositionally biased stretch (basic and acidic residues) spans 706–752 (NQEDEKTRSPVEKENQKSKGQENDHVHDKNKKCDHESSPGTDEDKSG). Threonine 746 carries the post-translational modification Phosphothreonine. At serine 751 the chain carries Phosphoserine.

Interacts with CLK1, PNN and with the phosphorylated C-terminal domain of RNA polymerase II.

The protein resides in the nucleus matrix. It localises to the nucleus speckle. The catalysed reaction is [protein]-peptidylproline (omega=180) = [protein]-peptidylproline (omega=0). With respect to regulation, inhibited by cyclosporin A (CsA). Functionally, PPIase that catalyzes the cis-trans isomerization of proline imidic peptide bonds in oligopeptides and may therefore assist protein folding. May be implicated in the folding, transport, and assembly of proteins. May play an important role in the regulation of pre-mRNA splicing. The polypeptide is Peptidyl-prolyl cis-trans isomerase G (Ppig) (Rattus norvegicus (Rat)).